The following is a 405-amino-acid chain: Acetate kinase (405 aa).

N7 lines the Mg(2+) pocket. An ATP-binding site is contributed by K14. R92 is a substrate binding site. The active-site Proton donor/acceptor is the D149. ATP-binding positions include 209 to 213 (HLGNG) and 284 to 286 (DMR). Mg(2+) is bound at residue E389.

It belongs to the acetokinase family. Homodimer. It depends on Mg(2+) as a cofactor. Mn(2+) serves as cofactor.

It localises to the cytoplasm. It catalyses the reaction acetate + ATP = acetyl phosphate + ADP. The protein operates within metabolic intermediate biosynthesis; acetyl-CoA biosynthesis; acetyl-CoA from acetate: step 1/2. Functionally, catalyzes the formation of acetyl phosphate from acetate and ATP. Can also catalyze the reverse reaction. The protein is Acetate kinase of Borrelia garinii subsp. bavariensis (strain ATCC BAA-2496 / DSM 23469 / PBi) (Borreliella bavariensis).